Here is a 254-residue protein sequence, read N- to C-terminus: 5-oxoprolinase subunit A 1 (254 aa).

The protein belongs to the LamB/PxpA family. Forms a complex composed of PxpA, PxpB and PxpC.

The catalysed reaction is 5-oxo-L-proline + ATP + 2 H2O = L-glutamate + ADP + phosphate + H(+). Functionally, catalyzes the cleavage of 5-oxoproline to form L-glutamate coupled to the hydrolysis of ATP to ADP and inorganic phosphate. The protein is 5-oxoprolinase subunit A 1 of Burkholderia pseudomallei (strain K96243).